The chain runs to 246 residues: 2,3-bisphosphoglycerate-dependent phosphoglycerate mutase (246 aa).

Residues 9 to 16 (RHGQSAWN), 22 to 23 (TG), R61, 88 to 91 (ERHY), K99, 115 to 116 (RR), and 181 to 182 (GN) contribute to the substrate site. The active-site Tele-phosphohistidine intermediate is H10. Residue E88 is the Proton donor/acceptor of the active site.

This sequence belongs to the phosphoglycerate mutase family. BPG-dependent PGAM subfamily.

It catalyses the reaction (2R)-2-phosphoglycerate = (2R)-3-phosphoglycerate. It functions in the pathway carbohydrate degradation; glycolysis; pyruvate from D-glyceraldehyde 3-phosphate: step 3/5. Its function is as follows. Catalyzes the interconversion of 2-phosphoglycerate and 3-phosphoglycerate. The chain is 2,3-bisphosphoglycerate-dependent phosphoglycerate mutase from Bifidobacterium longum (strain DJO10A).